The primary structure comprises 653 residues: Multidomain regulatory protein Rv1364c (653 aa).

Residues threonine 54 and threonine 81 each carry the phosphothreonine; by PknD modification. In terms of domain architecture, PAC spans 86-142 (SGSEWRLQTDYDGSGVEERYFDFVVTPRRRADGSIEGVQLIVDDVTSRVRARQAAEA). The PPM-type phosphatase domain maps to 177-396 (DIAAEYLVAA…DDVTLLAMQR (220 aa)). Positions 211 and 212 each coordinate Mn(2+). At threonine 299 the chain carries Phosphothreonine; by PknD. Aspartate 328 and aspartate 387 together coordinate Mn(2+). Threonine 390 bears the Phosphothreonine; by PknD mark. The interval 397–544 (RAPTPPLHIT…TMVRRAAFQQ (148 aa)) is anti-sigma factor kinase region. Phosphoserine; by PknD is present on serine 506. Threonine 520 and threonine 568 each carry phosphothreonine; by PknD. Residues 546–653 (IDSEFVSLVE…ADTEDIFAQE (108 aa)) enclose the STAS domain. Serine 600 is modified (phosphoserine; by autocatalysis).

In terms of assembly, exists in solution as both monomer and dimer. Both the phosphorylated and unphosphorylated proteins form extended dimers. Interacts with SigF. Can efficiently bind to SigF independently of its autophosphorylation. Interaction between SigF and Rv1364c is reduced significantly upon the phosphorylation of both proteins by PknD. Mn(2+) serves as cofactor. The cofactor is Mg(2+). Post-translationally, autophosphorylated. Phosphorylated by PknD on multiple threonine and serine residues. Phosphorylation is antagonized by the phosphatase activity.

It carries out the reaction O-phospho-L-seryl-[protein] + H2O = L-seryl-[protein] + phosphate. The catalysed reaction is O-phospho-L-threonyl-[protein] + H2O = L-threonyl-[protein] + phosphate. The enzyme catalyses L-seryl-[protein] + ATP = O-phospho-L-seryl-[protein] + ADP + H(+). It catalyses the reaction L-threonyl-[protein] + ATP = O-phospho-L-threonyl-[protein] + ADP + H(+). Its activity is regulated as follows. The phosphatase domain is activated by the anti-sigma factor kinase domain. Functionally, primarily acts as an independent SigF regulator that is sensitive to the osmosensory signal, mediating the cross talk of PknD with the SigF regulon. Possesses both phosphatase and kinase activities. The kinase domain functions as a classic anti-sigma factor-like kinase to phosphorylate the anti-anti-sigma factor domain at the canonical regulatory site, and the phosphatase domain antagonizes this activity. This is Multidomain regulatory protein Rv1364c from Mycobacterium tuberculosis (strain ATCC 25618 / H37Rv).